A 390-amino-acid chain; its full sequence is MATGDLKRSLRNLEQVLRLLNYPEEVDCVGLIKGDPAASLPIISYSFTSYSPYVTELIMESNVELIAKNDLRFIDAVYKLLRDQFNYKPILTKKQFIQCGFAEWKIQIVCDILNCVMKKHKELSSLQKIPSQQRKKISSGKSEPSLSNEKISAEAVGVDTSGRFVTSGKKKAVVIRHLYNEDNVEISEDTLSPITGVNEAVDVSDLNATEIKMPEVKVPEIKAEQQDINVNPEITALQTMLAECQEKLKELTLIEKRLDCLEQKMKGNVMVDENTWTNLLSRVTLLETEMLLSKKNDEYVEFNEINEDCASCSNMDLLNPHRKNKVGRPASIPLSSRYSTASSDSTPRASTINYCGLNEISEETTIQKMERMKKMFEETAELLKCPNHYL.

The binds with microtubules and centrioles stretch occupies residues 11-195 (RNLEQVLRLL…ISEDTLSPIT (185 aa)). Residues 233–267 (EITALQTMLAECQEKLKELTLIEKRLDCLEQKMKG) are a coiled coil. The disordered stretch occupies residues 323 to 347 (KNKVGRPASIPLSSRYSTASSDSTP). Phosphoserine occurs at positions 331 and 345. Residues 335–345 (SSRYSTASSDS) are compositionally biased toward low complexity. At threonine 346 the chain carries Phosphothreonine. Residues 361–385 (SEETTIQKMERMKKMFEETAELLKC) adopt a coiled-coil conformation.

In terms of assembly, interacts with CROCC. Interacts with POC1B; the interaction is direct and recruits POC1B to centriolar microtubules. Binds to centriolar microtubules.

Its subcellular location is the cytoplasm. It is found in the cytoskeleton. It localises to the microtubule organizing center. The protein resides in the centrosome. The protein localises to the centriole. Its subcellular location is the spindle pole. It is found in the midbody. Its function is as follows. Centriole-enriched microtubule-binding protein involved in centriole biogenesis. In collaboration with CEP295 and POC1B, is required for the centriole-to-centrosome conversion by ensuring the formation of bona fide centriole wall. Functions as a linker component that maintains centrosome cohesion. Associates with CROCC and regulates its stability and localization to the centrosome. This Macaca fascicularis (Crab-eating macaque) protein is Centrosomal protein of 44 kDa (CEP44).